The sequence spans 277 residues: MHPDSQLETAVKSGFDPKSLYSTELTKVNEPARTILEKYSKIPADNILQHVKDLRDRAFAFPYACIGQASFLELSIASSPCYPEMLDRVKKGDRLLDLGCAFGQELRQLIYDGAPSQNLYGSDLRPEFLELGLDLFMDRPTIKSRFIDADVLDDKSALVTQLTGELNIVYISLFLHVFDFDTQIKVAKRALELLAPKAGSLIVCRVVACRDQAIGNATNARLPYYYHDLASWNRLWERVQEETGLKLKVDNWEQDDALAKKHPLEGIYMLGSSIRRE.

Residues 123–124 (DL), 150–151 (DV), and 151–152 (VL) each bind S-adenosyl-L-methionine.

Belongs to the class I-like SAM-binding methyltransferase superfamily. As to quaternary structure, homodimer.

It functions in the pathway secondary metabolite biosynthesis; terpenoid biosynthesis. In terms of biological role, methyltransferase; part of the gene cluster that mediates the biosynthesis of andrastins, meroterpenoid compounds that exhibit inhibitory activity against ras farnesyltransferase, suggesting that they could be promising leads for antitumor agents. The first step of the pathway is the synthesis of 3,5-dimethylorsellinic acid (DMOA) by the polyketide synthase adrD via condensation of one acetyl-CoA starter unit with 3 malonyl-CoA units and 2 methylations. DMAO is then converted to farnesyl-DMAO by the prenyltransferase adrG. The methyltransferase adrK catalyzes the methylation of the carboxyl group of farnesyl-DMAO to farnesyl-DMAO methyl ester which is further converted to epoxyfarnesyl-DMAO methyl ester by the FAD-dependent monooxygenase adrH. The terpene cyclase adrI then catalyzes the carbon skeletal rearrangement to generate the andrastin E, the first compound in the pathway having the andrastin scaffold, with the tetracyclic ring system. The post-cyclization tailoring enzymes adrF, adrE, adrJ, and adrA, are involved in the conversion of andrastin E into andrastin A. The short chain dehydrogenase adrF is responsible for the oxidation of the C-3 a hydroxyl group of andrastin E to yield the corresponding ketone, andrastin D. The ketoreductase adrE stereoselectively reduces the carbonyl moiety to reverse the stereochemistry of the C-3 position to yield andrastin F. The acetyltransferase adrJ is the acetyltransferase that attaches the acetyl group to the C-3 hydroxyl group of andrastin F to yield andrastin C. Finally, the cytochrome P450 monooxygenase adrA catalyzes two sequential oxidation reactions of the C-23 methyl group, to generate the corresponding alcohol andrastin B, and aldehyde andrastin A. The polypeptide is Methyltransferase adrK (Penicillium rubens (strain ATCC 28089 / DSM 1075 / NRRL 1951 / Wisconsin 54-1255) (Penicillium chrysogenum)).